The following is a 205-amino-acid chain: Basigin (205 aa).

Residues 1 to 18 (MAAALFVLLGFALLGTHG) form the signal peptide. The Ig-like C2-type domain maps to 19-103 (ASGAAGTVFT…MGTANIQLHG (85 aa)). The Extracellular portion of the chain corresponds to 19 to 205 (ASGAAGTVFT…AIITLRVRSH (187 aa)). Cystine bridges form between Cys41–Cys87 and Cys126–Cys185. 3 N-linked (GlcNAc...) asparagine glycosylation sites follow: Asn44, Asn152, and Asn186. Positions 105–199 (PRVKAVKSSE…SKGSDQAIIT (95 aa)) constitute an Ig-like V-type domain.

Homooligomer. Interacts with VEGFA, KDR/VEGFR2, PPIA/CYPA, SLC16A12, SLC16A11, ATP1B2, MAG, L1CAM and AJAP1. Interacts with SLC16A1; interaction mediates SLC16A1 targeting to the plasma membrane. Interacts with SLC16A3; interaction mediates SLC16A3 targeting to the plasma membrane. Interacts with PPIL2; regulates BSG transport to the cell membrane. Interacts with XKR8; promoting its localization at the cell membrane. Interacts with SLC16A6; this interaction mediates targeting to the plasma membrane.

It localises to the cell membrane. The protein localises to the endoplasmic reticulum membrane. It is found in the basolateral cell membrane. Functionally, signaling receptor for cyclophilins, essential for PPIA/CYPA and PPIB/CYPB-dependent signaling related to chemotaxis and adhesion of immune cells. Plays an important role in targeting the monocarboxylate transporters SLC16A1/GLUT1, SLC16A3, SLC16A8, SLC16A11 and SLC16A12 to the plasma membrane. Acts as a coreceptor for vascular endothelial growth factor receptor 2 (KDR/VEGFR2) in endothelial cells enhancing its VEGFA-mediated activation and downstream signaling. Promotes angiogenesis through EPAS1/HIF2A-mediated up-regulation of VEGFA and KDR/VEGFR2 in endothelial cells. This chain is Basigin (BSG), found in Bos taurus (Bovine).